Consider the following 721-residue polypeptide: Glucans biosynthesis glucosyltransferase H (721 aa).

The next 7 membrane-spanning stretches (helical) occupy residues 54–74, 85–105, 404–424, 458–478, 493–513, 548–568, and 569–589; these read LIMV…YQVL, VVLV…VSAL, GIGA…GILI, FAGT…LVLI, FGGV…MMVF, YALP…VSWP, and LLLW…VALL.

Belongs to the glycosyltransferase 2 family. OpgH subfamily.

The protein resides in the cell inner membrane. Its pathway is glycan metabolism; osmoregulated periplasmic glucan (OPG) biosynthesis. In terms of biological role, involved in the biosynthesis of osmoregulated periplasmic glucans (OPGs). This is Glucans biosynthesis glucosyltransferase H from Rhodopseudomonas palustris (strain TIE-1).